The sequence spans 327 residues: Acetyl-coenzyme A carboxylase carboxyl transferase subunit beta (327 aa).

The CoA carboxyltransferase N-terminal domain maps to 24-293 (LWIKCPDTGQ…LTVTTAVEAP (270 aa)). Low complexity predominate over residues 293 to 311 (PAEAAAKAEPEATTTEQPG). The tract at residues 293-327 (PAEAAAKAEPEATTTEQPGAPAPTEPPAQPAAPQA) is disordered. The segment covering 312-327 (APAPTEPPAQPAAPQA) has biased composition (pro residues).

Belongs to the AccD/PCCB family. In terms of assembly, acetyl-CoA carboxylase is a heterohexamer composed of biotin carboxyl carrier protein (AccB), biotin carboxylase (AccC) and two subunits each of ACCase subunit alpha (AccA) and ACCase subunit beta (AccD).

It is found in the cytoplasm. The catalysed reaction is N(6)-carboxybiotinyl-L-lysyl-[protein] + acetyl-CoA = N(6)-biotinyl-L-lysyl-[protein] + malonyl-CoA. Its pathway is lipid metabolism; malonyl-CoA biosynthesis; malonyl-CoA from acetyl-CoA: step 1/1. In terms of biological role, component of the acetyl coenzyme A carboxylase (ACC) complex. Biotin carboxylase (BC) catalyzes the carboxylation of biotin on its carrier protein (BCCP) and then the CO(2) group is transferred by the transcarboxylase to acetyl-CoA to form malonyl-CoA. The sequence is that of Acetyl-coenzyme A carboxylase carboxyl transferase subunit beta from Rhodopseudomonas palustris (strain ATCC BAA-98 / CGA009).